The following is a 372-amino-acid chain: Probable E3 ubiquitin-protein ligase makorin-1 (372 aa).

C3H1-type zinc fingers lie at residues 20 to 45 (KHVTCRYFMHGLCKEGDNCRYSHDLT) and 48 to 75 (KPAAMICKFFQKGNCVFGERCRFDHCKP). A disordered region spans residues 78-110 (NEEFSSPQMLPPSSPSPSTDPESSQPAPRPKTQ). Residues 93–103 (SPSTDPESSQP) are compositionally biased toward low complexity. A C3H1-type 3 zinc finger spans residues 153-180 (ALRKQLCPYAAVGECRYGINCAYLHGDV). The tract at residues 181–208 (CDMCGLQVLHPTDNSQRSQHTKACIEAH) is makorin-type Cys-His. Residues 226-280 (CGVCMEVVFEKANPSERRFGILSNCNHCYCLKCIRKWRSAKQFESKIIKSCPECR) form an RING-type zinc finger. Residues 309 to 338 (GMGRKPCRYFDEGRGICPFGANCFYKHAFP) form a C3H1-type 4 zinc finger.

It carries out the reaction S-ubiquitinyl-[E2 ubiquitin-conjugating enzyme]-L-cysteine + [acceptor protein]-L-lysine = [E2 ubiquitin-conjugating enzyme]-L-cysteine + N(6)-ubiquitinyl-[acceptor protein]-L-lysine.. It participates in protein modification; protein ubiquitination. E3 ubiquitin ligase catalyzing the covalent attachment of ubiquitin moieties onto substrate proteins. The protein is Probable E3 ubiquitin-protein ligase makorin-1 of Tetraodon nigroviridis (Spotted green pufferfish).